The chain runs to 543 residues: NXPE family member 4 (543 aa).

A signal peptide spans 1 to 26 (MKTLASRKSLWMLLFIVIFWVSFTVF). 3 N-linked (GlcNAc...) asparagine glycosylation sites follow: Asn-91, Asn-159, and Asn-223.

It belongs to the NXPE family.

The protein resides in the secreted. In Mus musculus (Mouse), this protein is NXPE family member 4 (Nxpe4).